The chain runs to 238 residues: Ubiquinone biosynthesis O-methyltransferase (238 aa).

S-adenosyl-L-methionine-binding residues include R40, G59, D81, and M126.

It belongs to the methyltransferase superfamily. UbiG/COQ3 family.

It catalyses the reaction a 3-demethylubiquinol + S-adenosyl-L-methionine = a ubiquinol + S-adenosyl-L-homocysteine + H(+). The catalysed reaction is a 3-(all-trans-polyprenyl)benzene-1,2-diol + S-adenosyl-L-methionine = a 2-methoxy-6-(all-trans-polyprenyl)phenol + S-adenosyl-L-homocysteine + H(+). It participates in cofactor biosynthesis; ubiquinone biosynthesis. Its function is as follows. O-methyltransferase that catalyzes the 2 O-methylation steps in the ubiquinone biosynthetic pathway. This is Ubiquinone biosynthesis O-methyltransferase from Neisseria meningitidis serogroup C (strain 053442).